Consider the following 492-residue polypeptide: Auxin transporter-like protein 1 (492 aa).

The Cytoplasmic segment spans residues 1 to 67; that stretch reads MVPREQAEEA…DAWFSCASNQ (67 aa). Residues 68–85 traverse the membrane as a helical segment; that stretch reads VAQVLLTLPYSFSQLGML. Residues 86-87 are Extracellular-facing; sequence SG. A helical transmembrane segment spans residues 88–108; it reads VLLQLFYGFMGSWTAYLISVL. The Cytoplasmic portion of the chain corresponds to 109–143; sequence YVEYRSRKEKEGVSFKNHVIQWFEVLDGLLGPYWK. A helical membrane pass occupies residues 144-164; that stretch reads AAGLAFNCTFLLFGSVIQLIA. Residues 165–180 lie on the Extracellular side of the membrane; the sequence is CASNIYYINDRLDKRT. Residues 181-201 traverse the membrane as a helical segment; sequence WTYIFGACCATTVFIPSFHNY. A topological domain (cytoplasmic) is located at residue Arg202. The chain crosses the membrane as a helical span at residues 203 to 223; sequence IWSFLGLGMTTYTAWYLAIAA. The Extracellular segment spans residues 224–240; it reads LLNGQAEGITHTGPTKL. The chain crosses the membrane as a helical span at residues 241-261; the sequence is VLYFTGATNILYTFGGHAVTV. The Cytoplasmic portion of the chain corresponds to 262–274; sequence EIMHAMWKPAKFK. Residues 275–295 traverse the membrane as a helical segment; that stretch reads YIYLLATLYVFTLTLPSASAM. Topologically, residues 296 to 322 are extracellular; that stretch reads YWAFGDELLTHSNAFSLLPKTGWRDAA. A helical transmembrane segment spans residues 323–343; it reads VILMLIHQFITFGFACTPLYF. Residues 344-364 are Cytoplasmic-facing; sequence VWEKVIGMHDTKSICLRALAR. Residues 365–385 form a helical membrane-spanning segment; the sequence is LPIVVPIWFLAIIFPFFGPIN. Position 386 (Ser386) is a topological domain, extracellular. A helical transmembrane segment spans residues 387-407; it reads AVGALLVSFTVYIIPALAHIL. The Cytoplasmic segment spans residues 408 to 432; it reads TYRTASARMNAAEKPPFFLPSWTGM. A helical transmembrane segment spans residues 433–453; sequence FVLNMFIVVWVLVVGFGLGGW. Residues 454–492 are Extracellular-facing; sequence ASMVNFIRQIDTFGLFAKCYQCPKPAPALAQSPVPLPHH.

This sequence belongs to the amino acid/polyamine transporter 2 family. Amino acid/auxin permease (AAAP) (TC 2.A.18.1) subfamily.

Its subcellular location is the cell membrane. Its function is as follows. Carrier protein involved in proton-driven auxin influx. May mediate the formation of auxin gradient from developing leaves (site of auxin biosynthesis) to tips. This Oryza sativa subsp. japonica (Rice) protein is Auxin transporter-like protein 1.